Here is a 1299-residue protein sequence, read N- to C-terminus: DNA-directed RNA polymerase subunit beta' (1299 aa).

Positions 60, 62, 75, and 78 each coordinate Zn(2+). Residues Asp-535, Asp-537, and Asp-539 each coordinate Mg(2+). Cys-877, Cys-954, Cys-961, and Cys-964 together coordinate Zn(2+).

The protein belongs to the RNA polymerase beta' chain family. The RNAP catalytic core consists of 2 alpha, 1 beta, 1 beta' and 1 omega subunit. When a sigma factor is associated with the core the holoenzyme is formed, which can initiate transcription. The cofactor is Mg(2+). Zn(2+) serves as cofactor.

It carries out the reaction RNA(n) + a ribonucleoside 5'-triphosphate = RNA(n+1) + diphosphate. Functionally, DNA-dependent RNA polymerase catalyzes the transcription of DNA into RNA using the four ribonucleoside triphosphates as substrates. This chain is DNA-directed RNA polymerase subunit beta', found in Paenarthrobacter aurescens (strain TC1).